The following is a 221-amino-acid chain: Peptide methionine sulfoxide reductase MsrA (221 aa).

Residue Cys-54 is part of the active site.

Belongs to the MsrA Met sulfoxide reductase family.

It carries out the reaction L-methionyl-[protein] + [thioredoxin]-disulfide + H2O = L-methionyl-(S)-S-oxide-[protein] + [thioredoxin]-dithiol. The catalysed reaction is [thioredoxin]-disulfide + L-methionine + H2O = L-methionine (S)-S-oxide + [thioredoxin]-dithiol. Has an important function as a repair enzyme for proteins that have been inactivated by oxidation. Catalyzes the reversible oxidation-reduction of methionine sulfoxide in proteins to methionine. The sequence is that of Peptide methionine sulfoxide reductase MsrA from Methylobacterium sp. (strain 4-46).